A 462-amino-acid polypeptide reads, in one-letter code: UDP-N-acetylmuramate--L-alanine ligase (462 aa).

114–120 lines the ATP pocket; sequence GSHGKTT.

The protein belongs to the MurCDEF family.

Its subcellular location is the cytoplasm. The enzyme catalyses UDP-N-acetyl-alpha-D-muramate + L-alanine + ATP = UDP-N-acetyl-alpha-D-muramoyl-L-alanine + ADP + phosphate + H(+). It functions in the pathway cell wall biogenesis; peptidoglycan biosynthesis. Functionally, cell wall formation. The chain is UDP-N-acetylmuramate--L-alanine ligase from Brachyspira hyodysenteriae (strain ATCC 49526 / WA1).